Consider the following 441-residue polypeptide: Proline--tRNA ligase (441 aa).

This sequence belongs to the class-II aminoacyl-tRNA synthetase family. ProS type 2 subfamily. Homodimer.

The protein localises to the cytoplasm. It catalyses the reaction tRNA(Pro) + L-proline + ATP = L-prolyl-tRNA(Pro) + AMP + diphosphate. Catalyzes the attachment of proline to tRNA(Pro) in a two-step reaction: proline is first activated by ATP to form Pro-AMP and then transferred to the acceptor end of tRNA(Pro). In Bartonella tribocorum (strain CIP 105476 / IBS 506), this protein is Proline--tRNA ligase.